Reading from the N-terminus, the 170-residue chain is Flavin reductase (170 aa).

Residues Ser51, His138, and 159–162 (FYRG) each bind NAD(+).

Belongs to the non-flavoprotein flavin reductase family. As to quaternary structure, homodimer. Likely forms a loose transient complex with monooxygenases for which it provides FMNH(2).

The catalysed reaction is FMNH2 + NAD(+) = FMN + NADH + 2 H(+). It catalyses the reaction FADH2 + NAD(+) = FAD + NADH + 2 H(+). In terms of biological role, catalyzes the reduction of FMN, and to a lesser extent, FAD, using NADH as an electron donor. Is able to provide the FMNH(2) required for the Baeyer-Villiger oxidations catalyzed by 2,5-diketocamphane monooxygenases and 3,6-diketocamphane monooxygenase. NADPH acts as a very poor cosubstrate. This chain is Flavin reductase, found in Pseudomonas putida (Arthrobacter siderocapsulatus).